The sequence spans 590 residues: EGF-like and EMI domain-containing protein 1 (590 aa).

Positions 1 to 23 are cleaved as a signal peptide; it reads MTSPLCFWCFCVWAAANWPPGSA. An EMI domain is found at 44-104; sequence LSRPCAQAFI…RCCPGWIQWD (61 aa). Residues 105-145 form the EGF-like 1 domain; sequence DEPGCFSSLSSLGTHFSGRECSYQDTRQCLCSQGFHGPHCQ. Cystine bridges form between cysteine 109–cysteine 125, cysteine 135–cysteine 144, cysteine 168–cysteine 179, cysteine 175–cysteine 188, cysteine 190–cysteine 203, cysteine 209–cysteine 219, cysteine 215–cysteine 228, cysteine 230–cysteine 243, cysteine 249–cysteine 260, cysteine 256–cysteine 269, and cysteine 271–cysteine 284. Residues 164–204 enclose the EGF-like 2; calcium-binding domain; that stretch reads NVDECAVVNGGCQQRCINTLGTFHCECDTGYRRHADERTCI. The EGF-like 3 domain maps to 205–244; sequence KTDPCAGANGCAHLCQTENGMARCACHAGYQLSEDKKACE. The EGF-like 4; calcium-binding domain maps to 245-285; that stretch reads DINECAGELAPCAHHCVNSKGSFTCTCHPGFELGADRKHCY. The tract at residues 393–424 is disordered; it reads RLAQNPPQPFPYLDPSLTASYEDEDNDDADSE. Residues 413–424 are compositionally biased toward acidic residues; that stretch reads YEDEDNDDADSE. The 37-residue stretch at 445 to 481 folds into the EGF-like 5 domain; it reads FGLDCSLSCEDCMNGGRCQEGKSGCLCPAEWTGLICN. 3 disulfide bridges follow: cysteine 449–cysteine 462, cysteine 456–cysteine 469, and cysteine 471–cysteine 480.

This chain is EGF-like and EMI domain-containing protein 1 (Egfem1), found in Mus musculus (Mouse).